Consider the following 218-residue polypeptide: Probable nicotinate-nucleotide adenylyltransferase (218 aa).

The protein belongs to the NadD family.

The enzyme catalyses nicotinate beta-D-ribonucleotide + ATP + H(+) = deamido-NAD(+) + diphosphate. It functions in the pathway cofactor biosynthesis; NAD(+) biosynthesis; deamido-NAD(+) from nicotinate D-ribonucleotide: step 1/1. In terms of biological role, catalyzes the reversible adenylation of nicotinate mononucleotide (NaMN) to nicotinic acid adenine dinucleotide (NaAD). The sequence is that of Probable nicotinate-nucleotide adenylyltransferase from Burkholderia cenocepacia (strain ATCC BAA-245 / DSM 16553 / LMG 16656 / NCTC 13227 / J2315 / CF5610) (Burkholderia cepacia (strain J2315)).